The chain runs to 102 residues: Large ribosomal subunit protein bL28 (102 aa).

Residues 1–20 (MSNSCDLTGHGWQNGNMVSH) are compositionally biased toward polar residues. The interval 1–27 (MSNSCDLTGHGWQNGNMVSHSNRKTKK) is disordered.

Belongs to the bacterial ribosomal protein bL28 family.

This Neorickettsia sennetsu (strain ATCC VR-367 / Miyayama) (Ehrlichia sennetsu) protein is Large ribosomal subunit protein bL28.